A 202-amino-acid polypeptide reads, in one-letter code: Nucleoside triphosphate pyrophosphatase (202 aa).

The active-site Proton acceptor is aspartate 79.

This sequence belongs to the Maf family. Requires a divalent metal cation as cofactor.

Its subcellular location is the cytoplasm. The catalysed reaction is a ribonucleoside 5'-triphosphate + H2O = a ribonucleoside 5'-phosphate + diphosphate + H(+). It carries out the reaction a 2'-deoxyribonucleoside 5'-triphosphate + H2O = a 2'-deoxyribonucleoside 5'-phosphate + diphosphate + H(+). Functionally, nucleoside triphosphate pyrophosphatase. May have a dual role in cell division arrest and in preventing the incorporation of modified nucleotides into cellular nucleic acids. The chain is Nucleoside triphosphate pyrophosphatase from Rhodopseudomonas palustris (strain BisB5).